Consider the following 615-residue polypeptide: Chaperone protein DnaK (615 aa).

Thr174 is modified (phosphothreonine; by autocatalysis). Positions 581-615 are disordered; sequence QAAPKDGAEGDAKSADDNTVDGDFEEVDPNKDDKK. Basic and acidic residues predominate over residues 586–596; that stretch reads DGAEGDAKSAD. Residues 598–607 are compositionally biased toward acidic residues; the sequence is NTVDGDFEEV.

It belongs to the heat shock protein 70 family.

Acts as a chaperone. This chain is Chaperone protein DnaK, found in Leuconostoc mesenteroides subsp. mesenteroides (strain ATCC 8293 / DSM 20343 / BCRC 11652 / CCM 1803 / JCM 6124 / NCDO 523 / NBRC 100496 / NCIMB 8023 / NCTC 12954 / NRRL B-1118 / 37Y).